The following is a 445-amino-acid chain: Exodeoxyribonuclease 7 large subunit (445 aa).

It belongs to the XseA family. As to quaternary structure, heterooligomer composed of large and small subunits.

Its subcellular location is the cytoplasm. The enzyme catalyses Exonucleolytic cleavage in either 5'- to 3'- or 3'- to 5'-direction to yield nucleoside 5'-phosphates.. Functionally, bidirectionally degrades single-stranded DNA into large acid-insoluble oligonucleotides, which are then degraded further into small acid-soluble oligonucleotides. This chain is Exodeoxyribonuclease 7 large subunit, found in Staphylococcus aureus (strain JH1).